The following is a 472-amino-acid chain: Glutamate--tRNA ligase (472 aa).

A 'HIGH' region motif is present at residues 7–17; sequence PSPTGFLHVGG. Residues cysteine 96, cysteine 98, cysteine 123, and histidine 125 each coordinate Zn(2+). A compositionally biased stretch (basic and acidic residues) spans 112-129; that stretch reads ARKEKPRYDGRCRHRSEP. A disordered region spans residues 112-134; sequence ARKEKPRYDGRCRHRSEPPSDQP. The 'KMSKS' region motif lies at 234–238; the sequence is KLSKR. Lysine 237 lines the ATP pocket.

The protein belongs to the class-I aminoacyl-tRNA synthetase family. Glutamate--tRNA ligase type 1 subfamily. In terms of assembly, monomer. It depends on Zn(2+) as a cofactor.

It is found in the cytoplasm. The catalysed reaction is tRNA(Glu) + L-glutamate + ATP = L-glutamyl-tRNA(Glu) + AMP + diphosphate. In terms of biological role, catalyzes the attachment of glutamate to tRNA(Glu) in a two-step reaction: glutamate is first activated by ATP to form Glu-AMP and then transferred to the acceptor end of tRNA(Glu). This chain is Glutamate--tRNA ligase, found in Magnetococcus marinus (strain ATCC BAA-1437 / JCM 17883 / MC-1).